The chain runs to 1104 residues: Partner and localizer of BRCA2 (1104 aa).

The required for its oligomerization and is important for its focal concentration at DNA damage sites stretch occupies residues M1–K157. Residues M1–L195 form an interaction with RAD51 region. Residues M1–P308 are interaction with BRCA1. Residues L9–K48 adopt a coiled-coil conformation. The span at K39–E52 shows a compositional bias: basic and acidic residues. Disordered stretches follow at residues K39–N91, G122–K157, and P243–P272. Polar residues-rich tracts occupy residues E59–I70 and N138–S154. The residue at position 274 (S274) is a Phosphoserine. A disordered region spans residues L304–P354. The segment covering G306 to T338 has biased composition (polar residues). Phosphoserine is present on S364. A chAM (Chromatin-association motif); required for chromatin association, mediates nucleosome association region spans residues S374–K424. Disordered stretches follow at residues K417–T494 and L581–P730. S432 bears the Phosphoserine mark. A compositionally biased stretch (low complexity) spans T446 to S462. Positions R483–A492 are enriched in basic residues. The span at T664–Q713 shows a compositional bias: polar residues. Positions Q693 to F1104 are required for interaction with POLH and POLH DNA synthesis stimulation. Residues G771–F1104 are interaction with RAD51 and BRCA2. The tract at residues G771–F1104 is interaction with RAD51, BRCA2 and POLH. 7 WD repeats span residues N772–T833, V835–L879, K880–P927, D928–D970, S976–S1027, A1033–P1071, and S1073–F1104.

Homooligomer; dissociated upon DNA damage thus allowing association with BRCA1. Oligomerization is essential for its focal accumulation at DNA breaks. Part of a BRCA complex containing BRCA1, BRCA2 and PALB2. Interacts with BRCA1 and this interaction is essential for its function in HRR. Interacts with RAD51AP1 and MORF4L1/MRG15. Component of the homologous recombination repair (HR) complex composed of ERCC5/XPG, BRCA2, PALB2, DSS1 and RAD51. Within the complex, interacts with ERCC5/XPG and BRCA2. Interacts with BRCA2, RAD51C, RAD51 and XRCC3; the interactions are direct and it may serve as a scaffold for a HR complex containing PALB2, BRCA2, RAD51C, RAD51 and XRCC3. Interacts with POLH; the interaction is direct.

It is found in the nucleus. Its function is as follows. Plays a critical role in homologous recombination repair (HRR) through its ability to recruit BRCA2 and RAD51 to DNA breaks. Strongly stimulates the DNA strand-invasion activity of RAD51, stabilizes the nucleoprotein filament against a disruptive BRC3-BRC4 polypeptide and helps RAD51 to overcome the suppressive effect of replication protein A (RPA). Functionally cooperates with RAD51AP1 in promoting of D-loop formation by RAD51. Serves as the molecular scaffold in the formation of the BRCA1-PALB2-BRCA2 complex which is essential for homologous recombination. Via its WD repeats is proposed to scaffold a HR complex containing RAD51C and BRCA2 which is thought to play a role in HR-mediated DNA repair. Essential partner of BRCA2 that promotes the localization and stability of BRCA2. Also enables its recombinational repair and checkpoint functions of BRCA2. May act by promoting stable association of BRCA2 with nuclear structures, allowing BRCA2 to escape the effects of proteasome-mediated degradation. Binds DNA with high affinity for D loop, which comprises single-stranded, double-stranded and branched DNA structures. May play a role in the extension step after strand invasion at replication-dependent DNA double-strand breaks; together with BRCA2 is involved in both POLH localization at collapsed replication forks and DNA polymerization activity. The sequence is that of Partner and localizer of BRCA2 (Palb2) from Mus musculus (Mouse).